Here is a 211-residue protein sequence, read N- to C-terminus: Urease accessory protein UreG (211 aa).

Position 11-18 (11-18 (GPVGAGKT)) interacts with GTP.

It belongs to the SIMIBI class G3E GTPase family. UreG subfamily. As to quaternary structure, homodimer. UreD, UreF and UreG form a complex that acts as a GTP-hydrolysis-dependent molecular chaperone, activating the urease apoprotein by helping to assemble the nickel containing metallocenter of UreC. The UreE protein probably delivers the nickel.

The protein resides in the cytoplasm. Facilitates the functional incorporation of the urease nickel metallocenter. This process requires GTP hydrolysis, probably effectuated by UreG. The sequence is that of Urease accessory protein UreG from Actinobacillus pleuropneumoniae (Haemophilus pleuropneumoniae).